Reading from the N-terminus, the 360-residue chain is GDSL esterase/lipase At1g06990 (360 aa).

Residues methionine 1–alanine 22 form the signal peptide. 2 N-linked (GlcNAc...) asparagine glycosylation sites follow: asparagine 26 and asparagine 31. Serine 44 (nucleophile) is an active-site residue. N-linked (GlcNAc...) asparagine glycosylation is found at asparagine 73, asparagine 126, and asparagine 272. Active-site residues include aspartate 335 and histidine 338.

Belongs to the 'GDSL' lipolytic enzyme family.

It localises to the secreted. The protein is GDSL esterase/lipase At1g06990 of Arabidopsis thaliana (Mouse-ear cress).